The sequence spans 379 residues: Phospholipase A1 (379 aa).

An N-terminal signal peptide occupies residues 1-20 (MKFITAILVIFCVYLLSTAG). The propeptide occupies 21 to 73 (DSKILPLKKLPSKIFGHLKSHVDNTVKKPLKVFGHLKSHVENSVGPLRMNKLT). The cysteines at positions 76 and 154 are disulfide-linked. An N-linked (GlcNAc...) asparagine glycan is attached at N126. Catalysis depends on S204, which acts as the Nucleophile. D232 functions as the Charge relay system in the catalytic mechanism. Intrachain disulfides connect C243–C248 and C285–C291. H293 acts as the Charge relay system in catalysis.

It belongs to the AB hydrolase superfamily. Lipase family. Post-translationally, contains five disulfide bonds. In terms of tissue distribution, expressed by the venom gland.

It localises to the secreted. The catalysed reaction is a 1,2-diacyl-sn-glycero-3-phosphocholine + H2O = a 2-acyl-sn-glycero-3-phosphocholine + a fatty acid + H(+). Its function is as follows. Catalyzes the hydrolysis of phosphatidylcholine with phospholipase A1 activity. May act as an allergen and induce hemolytic activity. The chain is Phospholipase A1 from Dinoponera quadriceps (South American ant).